A 190-amino-acid polypeptide reads, in one-letter code: Probable RNA-binding protein 18 (190 aa).

In terms of domain architecture, RRM spans 25–106 (HRLWIGNLDP…KKLVVRWAHA (82 aa)). The disordered stretch occupies residues 166–190 (VYSYFKPPDKKRTTPYSRTAWKSRR).

The chain is Probable RNA-binding protein 18 (Rbm18) from Mus musculus (Mouse).